The chain runs to 219 residues: LexA repressor (219 aa).

The segment at residues 28-48 is a DNA-binding region (H-T-H motif); the sequence is RAEIAAELGFRSANAAEEHLQ. Active-site for autocatalytic cleavage activity residues include serine 138 and lysine 175.

It belongs to the peptidase S24 family. Homodimer.

It catalyses the reaction Hydrolysis of Ala-|-Gly bond in repressor LexA.. Its function is as follows. Represses a number of genes involved in the response to DNA damage (SOS response), including recA and lexA. In the presence of single-stranded DNA, RecA interacts with LexA causing an autocatalytic cleavage which disrupts the DNA-binding part of LexA, leading to derepression of the SOS regulon and eventually DNA repair. The protein is LexA repressor of Herminiimonas arsenicoxydans.